A 59-amino-acid polypeptide reads, in one-letter code: MAKTIKITQTRSAIGRLPKHKATLLGLGLRRIGHTVEREDTPAIRGMINAVSFMVKVEE.

Belongs to the universal ribosomal protein uL30 family. As to quaternary structure, part of the 50S ribosomal subunit.

The polypeptide is Large ribosomal subunit protein uL30 (Escherichia coli (strain UTI89 / UPEC)).